The following is a 156-amino-acid chain: Large ribosomal subunit protein uL23 (156 aa).

Over residues 1–19 the composition is skewed to basic and acidic residues; it reads MAPKAKKEAPAPPKVEAKA. Residues 1 to 67 form a disordered region; sequence MAPKAKKEAP…PKYPRKSAPR (67 aa). A N,N,N-trimethylalanine modification is found at A2. K14 participates in a covalent cross-link: Glycyl lysine isopeptide (Lys-Gly) (interchain with G-Cter in SUMO2). Residues 20-67 are compositionally biased toward basic residues; that stretch reads KALKAKKAVLKGVHSHKKKKIRTSPTFRRPKTLRLRRQPKYPRKSAPR. Residues 32 to 74 are beta-like import receptor binding (BIB) domain; the sequence is VHSHKKKKIRTSPTFRRPKTLRLRRQPKYPRKSAPRRNKLDHY. Citrulline is present on R41. S43 is subject to Phosphoserine. T45 is subject to Phosphothreonine. K70 is modified (N6-acetyllysine).

It belongs to the universal ribosomal protein uL23 family. Component of the large ribosomal subunit. Interacts with LYAR and GNL2. Interacts with MDM2; this interaction may promote MDM2-mediated p53/TP53 polyubiquitination. Directly interacts (via BIB domain) with IPO5, IPO7, KPNB1 and TNPO1; these interactions are involved in RPL23A nuclear import for the assembly of ribosomal subunits. Interacts with IPO8. N-terminus is methylated by METTL11A/NTM1. Post-translationally, citrullinated by PADI4.

Its subcellular location is the cytoplasm. The protein localises to the nucleus. Its function is as follows. Component of the large ribosomal subunit. The ribosome is a large ribonucleoprotein complex responsible for the synthesis of proteins in the cell. Binds a specific region on the 26S rRNA. May promote p53/TP53 degradation possibly through the stimulation of MDM2-mediated TP53 polyubiquitination. In Oryctolagus cuniculus (Rabbit), this protein is Large ribosomal subunit protein uL23 (RPL23A).